The primary structure comprises 44 residues: uncharacterized protein (44 aa).

This is an uncharacterized protein from Vaccinia virus (strain Western Reserve) (VACV).